Reading from the N-terminus, the 179-residue chain is ATP synthase subunit delta (179 aa).

It belongs to the ATPase delta chain family. As to quaternary structure, F-type ATPases have 2 components, F(1) - the catalytic core - and F(0) - the membrane proton channel. F(1) has five subunits: alpha(3), beta(3), gamma(1), delta(1), epsilon(1). F(0) has three main subunits: a(1), b(2) and c(10-14). The alpha and beta chains form an alternating ring which encloses part of the gamma chain. F(1) is attached to F(0) by a central stalk formed by the gamma and epsilon chains, while a peripheral stalk is formed by the delta and b chains.

It localises to the cell membrane. F(1)F(0) ATP synthase produces ATP from ADP in the presence of a proton or sodium gradient. F-type ATPases consist of two structural domains, F(1) containing the extramembraneous catalytic core and F(0) containing the membrane proton channel, linked together by a central stalk and a peripheral stalk. During catalysis, ATP synthesis in the catalytic domain of F(1) is coupled via a rotary mechanism of the central stalk subunits to proton translocation. Its function is as follows. This protein is part of the stalk that links CF(0) to CF(1). It either transmits conformational changes from CF(0) to CF(1) or is implicated in proton conduction. This is ATP synthase subunit delta from Mycoplasmopsis pulmonis (strain UAB CTIP) (Mycoplasma pulmonis).